The primary structure comprises 418 residues: Gamma-glutamyl phosphate reductase (418 aa).

Belongs to the gamma-glutamyl phosphate reductase family.

Its subcellular location is the cytoplasm. It carries out the reaction L-glutamate 5-semialdehyde + phosphate + NADP(+) = L-glutamyl 5-phosphate + NADPH + H(+). The protein operates within amino-acid biosynthesis; L-proline biosynthesis; L-glutamate 5-semialdehyde from L-glutamate: step 2/2. Its function is as follows. Catalyzes the NADPH-dependent reduction of L-glutamate 5-phosphate into L-glutamate 5-semialdehyde and phosphate. The product spontaneously undergoes cyclization to form 1-pyrroline-5-carboxylate. This chain is Gamma-glutamyl phosphate reductase, found in Histophilus somni (strain 129Pt) (Haemophilus somnus).